Reading from the N-terminus, the 181-residue chain is UPF0397 protein STER_0346 (181 aa).

A run of 5 helical transmembrane segments spans residues 11–31 (ATGIGAALFIIIGMFVNIPIF), 45–65 (LFSVIFGPITGFFMGFIGHAL), 72–92 (GNISWAWVLASGITGLVIGLF), 109–129 (IWFNLAQALGLLIGYGVVTPI), and 147–167 (FVAGVANFITIAIGGTLLLAI).

It belongs to the UPF0397 family.

Its subcellular location is the cell membrane. The protein is UPF0397 protein STER_0346 of Streptococcus thermophilus (strain ATCC BAA-491 / LMD-9).